The sequence spans 513 residues: ATP synthase subunit alpha (513 aa).

Residue 169–176 coordinates ATP; the sequence is GDRQTGKT.

It belongs to the ATPase alpha/beta chains family. As to quaternary structure, F-type ATPases have 2 components, CF(1) - the catalytic core - and CF(0) - the membrane proton channel. CF(1) has five subunits: alpha(3), beta(3), gamma(1), delta(1), epsilon(1). CF(0) has three main subunits: a(1), b(2) and c(9-12). The alpha and beta chains form an alternating ring which encloses part of the gamma chain. CF(1) is attached to CF(0) by a central stalk formed by the gamma and epsilon chains, while a peripheral stalk is formed by the delta and b chains.

Its subcellular location is the cell inner membrane. The enzyme catalyses ATP + H2O + 4 H(+)(in) = ADP + phosphate + 5 H(+)(out). Its function is as follows. Produces ATP from ADP in the presence of a proton gradient across the membrane. The alpha chain is a regulatory subunit. The polypeptide is ATP synthase subunit alpha (Enterobacter sp. (strain 638)).